A 197-amino-acid chain; its full sequence is Nucleoside triphosphate pyrophosphatase (197 aa).

The active-site Proton acceptor is Asp74.

The protein belongs to the Maf family. A divalent metal cation is required as a cofactor.

It localises to the cytoplasm. The catalysed reaction is a ribonucleoside 5'-triphosphate + H2O = a ribonucleoside 5'-phosphate + diphosphate + H(+). It carries out the reaction a 2'-deoxyribonucleoside 5'-triphosphate + H2O = a 2'-deoxyribonucleoside 5'-phosphate + diphosphate + H(+). Nucleoside triphosphate pyrophosphatase. May have a dual role in cell division arrest and in preventing the incorporation of modified nucleotides into cellular nucleic acids. In Granulibacter bethesdensis (strain ATCC BAA-1260 / CGDNIH1), this protein is Nucleoside triphosphate pyrophosphatase.